A 561-amino-acid polypeptide reads, in one-letter code: Liver carboxylesterase 1F (561 aa).

The N-terminal stretch at 1–18 (MCLSFLFLVSLATCVVYG) is a signal peptide. Asparagine 79 carries an N-linked (GlcNAc...) asparagine glycan. Cysteine 87 and cysteine 116 are oxidised to a cystine. The Acyl-ester intermediate role is filled by serine 221. Cysteine 273 and cysteine 284 are oxidised to a cystine. Catalysis depends on charge relay system residues glutamate 353 and histidine 466. The Prevents secretion from ER signature appears at 558–561 (HNEL).

This sequence belongs to the type-B carboxylesterase/lipase family. In terms of tissue distribution, expressed in liver and kidney.

It is found in the lipid droplet. Its subcellular location is the cytoplasm. The protein localises to the cytosol. It localises to the endoplasmic reticulum. The protein resides in the microsome. The enzyme catalyses a carboxylic ester + H2O = an alcohol + a carboxylate + H(+). It catalyses the reaction all-trans-retinyl hexadecanoate + H2O = all-trans-retinol + hexadecanoate + H(+). Functionally, involved in the detoxification of xenobiotics and in the activation of ester and amide prodrugs. Hydrolyzes retinyl esters. Hydrolyzes p-nitrophenyl butyrate (PNPB), triacylglycerol and monoacylglycerol. Shows higher activity against PNPB, a short-chain fatty acid ester, than against triolein, a long-chain fatty acid ester. Shows no detectable activity against diacylglycerol, cholesterol ester or phospholipids. May play a role in adipocyte lipolysis. The protein is Liver carboxylesterase 1F of Rattus norvegicus (Rat).